Consider the following 72-residue polypeptide: MAKEDSIEMQGTIIDTLPNTMFRVELENGHIVTAHISGKMRKNYIRILTGDKVTVQLTPYDLSKGRIVFRAR.

Residues 1-72 form the S1-like domain; it reads MAKEDSIEMQ…SKGRIVFRAR (72 aa).

It belongs to the IF-1 family. Component of the 30S ribosomal translation pre-initiation complex which assembles on the 30S ribosome in the order IF-2 and IF-3, IF-1 and N-formylmethionyl-tRNA(fMet); mRNA recruitment can occur at any time during PIC assembly.

It localises to the cytoplasm. One of the essential components for the initiation of protein synthesis. Stabilizes the binding of IF-2 and IF-3 on the 30S subunit to which N-formylmethionyl-tRNA(fMet) subsequently binds. Helps modulate mRNA selection, yielding the 30S pre-initiation complex (PIC). Upon addition of the 50S ribosomal subunit IF-1, IF-2 and IF-3 are released leaving the mature 70S translation initiation complex. The polypeptide is Translation initiation factor IF-1 (Psychromonas ingrahamii (strain DSM 17664 / CCUG 51855 / 37)).